The following is a 472-amino-acid chain: Methanethiol oxidase (472 aa).

Alanine 2 is modified (N-acetylalanine). Serine 467 is modified (phosphoserine).

This sequence belongs to the selenium-binding protein family. In terms of assembly, interacts with USP33. In terms of processing, the N-terminus is blocked.

The protein localises to the nucleus. The protein resides in the cytoplasm. It is found in the cytosol. Its subcellular location is the membrane. It catalyses the reaction methanethiol + O2 + H2O = hydrogen sulfide + formaldehyde + H2O2 + H(+). Its pathway is organosulfur degradation. Its function is as follows. Catalyzes the oxidation of methanethiol, an organosulfur compound known to be produced in substantial amounts by gut bacteria. Selenium-binding protein which may be involved in the sensing of reactive xenobiotics in the cytoplasm. May be involved in intra-Golgi protein transport. The protein is Methanethiol oxidase (SELENBP1) of Bos taurus (Bovine).